The following is a 560-amino-acid chain: Radial spoke head protein 3 homolog (560 aa).

2 disordered regions span residues 134 to 186 (RKRG…EEPM) and 225 to 249 (ARKRALARKQAQEQLRPQTPEPVEG). A compositionally biased stretch (polar residues) spans 153–162 (RAPSTYTYTS). Residues 215–239 (DSLELQRQREARKRALARKQAQEQL) adopt a coiled-coil conformation. The residue at position 286 (T286) is a Phosphothreonine; by MAPK1. The stretch at 331–385 (LEVMEEEELANLRASQREYEELRNSERAEVQRLEEQERRHREEKERRKKQQWEIM) forms a coiled coil. Disordered regions lie at residues 354-375 (NSERAEVQRLEEQERRHREEKE), 473-498 (HGEDTHQSPEPEDEPGGPGAMTESLE), and 526-560 (DRRSSQERKFMEERELLGQDEETAMRKSLGEEELS).

This sequence belongs to the flagellar radial spoke RSP3 family. Component of the axonemal radial spoke 1 (RS1) and 2 (RS2) complexes, at least composed of spoke head proteins RSPH1, RSPH3, RSPH9 and the cilia-specific component RSPH4A or sperm-specific component RSPH6A, spoke stalk proteins RSPH14, DNAJB13, DYDC1, ROPN1L and NME5, and the RS1 complex-specific anchor protein IQUB. Interacts with IQUB. Interacts with phosphorylated MAPK1. Interacts with MEK1. Interacts with PKA regulatory subunits PRKAR1A and PRKAR1B. Interacts with RSPH1. Interacts with RSPH4A. Interacts with RSPH6A. Interacts with RSPH9. Interacts with LRRC23.

Its subcellular location is the cytoplasm. The protein resides in the cytoskeleton. The protein localises to the cilium axoneme. It is found in the flagellum axoneme. Its function is as follows. Functions as part of axonemal radial spoke complexes that play an important part in the motility of sperm and cilia. Functions as a protein kinase A-anchoring protein that scaffolds the cAMP-dependent protein kinase holoenzyme. May serve as a point of convergence for MAPK and PKA signaling in cilia. In Homo sapiens (Human), this protein is Radial spoke head protein 3 homolog (RSPH3).